Reading from the N-terminus, the 566-residue chain is APC membrane recruitment protein 2 (566 aa).

4 disordered regions span residues 120 to 176, 192 to 237, 277 to 307, and 342 to 533; these read KKNG…PGLI, TQKP…SPCS, VTGCGDVIADQDDDGGSSMGSKLVPGNGKKV, and MIPP…RTKI. Basic and acidic residues-rich tracts occupy residues 123–134, 155–168, and 192–204; these read GKSENVRGEQAE, SKKDKSYKDDKEGA, and TQKPLCEKGKSTE. Composition is skewed to basic and acidic residues over residues 364 to 377 and 389 to 411; these read REVKCSDSAQDRNA and YRKERGDQNSKANEKRQCLRNSD. Low complexity predominate over residues 464–476; that stretch reads PPLSHSHSKPLSP. Composition is skewed to polar residues over residues 477-489 and 504-517; these read VTTSCPVKTASSN and HTTNQGTDSSSGSA.

This sequence belongs to the Amer family.

It localises to the cell membrane. Functionally, negative regulator of the canonical Wnt signaling pathway involved in neuroectodermal patterning. Acts by specifically binding phosphatidylinositol 4,5-bisphosphate (PtdIns(4,5)P2), translocating to the cell membrane and interacting with key regulators of the canonical Wnt signaling pathway, such as components of the beta-catenin destruction complex. The polypeptide is APC membrane recruitment protein 2 (amer2) (Xenopus tropicalis (Western clawed frog)).